The following is a 293-amino-acid chain: MTEPNSEPAAVAPLMGATDIRRLAEEIGVRPTKTLGQNFVIDGNTIRRIVAAAAIGDDETVLEVGPGLGSLTLGLLDAAKAVVAVEIDPVLAEKLPETVRAWRPGAEENFHLVLSDAMKVTELPLPPTALVANLPYNVAVPVVLHLLQHFPSLQHGLVMVQDEVADRLAATPGSKIYGVPSVKAAWYGHMRKAGVIGMNVFWPAPKIHSGLVAFTRHDPPETHATREQVFAVIDAAFAQRRKTLRAALAGWAGSASEAERCLVAAGLDPTARGEVLDINAYVKIAEARHPVDA.

S-adenosyl-L-methionine contacts are provided by N38, V40, G65, E86, D116, and N133.

It belongs to the class I-like SAM-binding methyltransferase superfamily. rRNA adenine N(6)-methyltransferase family. RsmA subfamily.

The protein resides in the cytoplasm. The catalysed reaction is adenosine(1518)/adenosine(1519) in 16S rRNA + 4 S-adenosyl-L-methionine = N(6)-dimethyladenosine(1518)/N(6)-dimethyladenosine(1519) in 16S rRNA + 4 S-adenosyl-L-homocysteine + 4 H(+). Its function is as follows. Specifically dimethylates two adjacent adenosines (A1518 and A1519) in the loop of a conserved hairpin near the 3'-end of 16S rRNA in the 30S particle. May play a critical role in biogenesis of 30S subunits. In Paenarthrobacter aurescens (strain TC1), this protein is Ribosomal RNA small subunit methyltransferase A.